Consider the following 1009-residue polypeptide: RNA2 polyprotein (1009 aa).

The interval 387 to 393 is involved in tubule formation by the movement protein; the sequence is FVYKIGG.

As to quaternary structure, interacts with the large capsid protein. In terms of assembly, interacts with the small capsid protein. Homomultimer; assembles as pentons. Interacts with the movement protein (via C-terminus). Interacts (via C-terminus) with the large capsid protein. Specific enzymatic cleavages by picornain 3C-like protease in vivo yield mature proteins.

It localises to the host cell junction. It is found in the host plasmodesma. Its subcellular location is the virion. Functionally, responsible for viral RNA2 accumulation. May function by recruiting the RNA1-encoded polyprotein that contains the replication protein to RNA2 and enable its replication. Its function is as follows. Transports the viral genome to neighboring plant cells directly through plasmosdesmata, without any budding. The movement protein allows efficient cell to cell propagation, by bypassing the host cell wall barrier. Acts by forming a tubular structure at the host plasmodesmata, enlarging it enough to allow free passage of virion capsids. Binds to GTP and to single-stranded RNA and single-stranded DNA in a non-sequence-specific manner. In terms of biological role, together with the small capsid protein, forms an icosahedral capsid (T=3) enclosing the viral positive strand RNA genome, with a diameter of approximately 300 Angstroms. The capsid is formed from 60 copies each of the large and the small capsid protein. The large capsid protein interacts with the viral RNA. Together with the large capsid protein, forms an icosahedral capsid (T=3) enclosing the viral positive strand RNA genome, with a diameter of approximately 300 Angstroms. The capsid is formed from 60 copies each of the large and the small capsid protein. The small capsid protein forms the turrets at the fivefold axes of the viral particle. The polypeptide is RNA2 polyprotein (Squash mosaic virus (strain melon) (SqMV)).